The chain runs to 274 residues: Penicillin-insensitive murein endopeptidase (274 aa).

The signal sequence occupies residues methionine 1 to alanine 19. Disulfide bonds link cysteine 44/cysteine 265, cysteine 187/cysteine 235, and cysteine 216/cysteine 223. Histidine 110, histidine 113, aspartate 120, aspartate 147, histidine 150, and histidine 211 together coordinate Zn(2+). The disordered stretch occupies residues aspartate 225–leucine 274.

This sequence belongs to the peptidase M74 family. As to quaternary structure, dimer. Requires Zn(2+) as cofactor.

The protein resides in the periplasm. Functionally, murein endopeptidase that cleaves the D-alanyl-meso-2,6-diamino-pimelyl amide bond that connects peptidoglycan strands. Likely plays a role in the removal of murein from the sacculus. In Salmonella agona (strain SL483), this protein is Penicillin-insensitive murein endopeptidase.